The primary structure comprises 320 residues: Major pollen allergen Pha a 5.1 (320 aa).

A signal peptide spans 1–23 (MAVQKYTMALFLAVALVAGPAAP). The interval 21–45 (AAPTPPTPRTPPLLPPPRARDKATL) is disordered. Positions 22 to 37 (APTPPTPRTPPLLPPP) are enriched in pro residues.

This sequence belongs to the Poa p IX/Phl p VI allergen family.

The protein is Major pollen allergen Pha a 5.1 of Phalaris aquatica (Canary grass).